The primary structure comprises 683 residues: Stromal interaction molecule 1 (683 aa).

The N-terminal stretch at 1–22 (MDVCARLALWLLWGLLLHHGQS) is a signal peptide. At 23-211 (LSQSHSEKAT…LLTRHNHLKD (189 aa)) the chain is on the extracellular side. EF-hand domains follow at residues 62–95 (SFDA…EDLN) and 100–124 (TVKH…AWKS). Positions 74, 76, 78, 80, and 85 each coordinate Ca(2+). Residues Asn-129 and Asn-169 are each glycosylated (N-linked (GlcNAc...) asparagine). The 69-residue stretch at 130–198 (WTVDEVVQWL…QLKALDTVLF (69 aa)) folds into the SAM domain. A helical transmembrane segment spans residues 212–232 (FMLVVSIVIGVGGCWFAYIQN). At 233–683 (RYSKEHMKKM…LKIFKKPLKK (451 aa)) the chain is on the cytoplasmic side. A coiled-coil region spans residues 246 to 440 (LEGLHRAEQS…IEILCGFQIV (195 aa)). The residue at position 255 (Ser-255) is a Phosphoserine. An SOAR/CAD region spans residues 342-440 (PEALQKWLQL…IEILCGFQIV (99 aa)). A contributes to fast Ca(2+)-dependent inactivation of CRAC channels region spans residues 473–481 (DDVDDMDEE). Residues 488 to 497 (MQSPSLQSSV) show a composition bias toward low complexity. Positions 488–535 (MQSPSLQSSVRQRLTEPQHGLGSQRDLTHSDSESSLHMSDRQRLAPKP) are disordered. Position 502 is a phosphothreonine (Thr-502). Ser-510 is modified (phosphoserine). A compositionally biased stretch (basic and acidic residues) spans 513-530 (DLTHSDSESSLHMSDRQR). Thr-515 bears the Phosphothreonine mark. Residues Ser-517, Ser-519, Ser-521, Ser-522, Ser-565, Ser-573, Ser-606, Ser-616, and Ser-626 each carry the phosphoserine modification. Positions 597–683 (LSSPALPSGS…LKIFKKPLKK (87 aa)) are disordered. Residues 640–643 (TRIP) carry the Microtubule tip localization signal motif. Acidic residues predominate over residues 653–664 (EEDNGSIGEETD). Ser-658 bears the Phosphoserine mark. Phosphothreonine is present on Thr-663. At Ser-666 the chain carries Phosphoserine. Residues 668-683 (GRKKFPLKIFKKPLKK) are compositionally biased toward basic residues. The tract at residues 670–683 (KKFPLKIFKKPLKK) is required for generation of inwardly rectifying CRAC currents.

In terms of assembly, monomer in the presence of Ca(2+). It oligomerizes in absence of Ca(2+). Forms homooligomers and heterooligomers with STIM2. Interacts with pore-forming subunits of CRAC channels, ORAI1, ORAI2 and ORAI3; this interaction is potentiated upon Ca(2+) store depletion. Interacts (via the transmembrane region and the SOAR/CAD domain) with SPPL3; the interaction promotes the binding of STIM1 to ORAI1. Interacts with ORAI1. Interacts with MAPRE1; probably required for targeting to the growing microtubule plus ends. Interacts with CRACR2A/EFCAB4B; the interaction is direct and takes place in absence of Ca(2+). Forms a complex with CRACR2A/EFCAB4B and ORAI1 at low concentration of Ca(2+), the complex dissociates at elevated Ca(2+) concentrations. Interacts with SARAF, promoting a slow inactivation of STIM1-dependent SOCE activity, possibly by facilitating the deoligomerization of STIM1. Interacts with EFHB; the interaction takes place upon Ca(2+)-store depletion and inhibits the association with SARAF. Interacts with ASPH. Interacts with SLC35G1; intracellular Ca(2+)-dependent. May interact with ATP1A1, ATP2A2, ATP2B1, ATP2B4, KPNB1 and XPO1; through SLC35G1. Interacts with TMEM203. Interacts with STIMATE, promoting STIM1 conformational switch. Interacts with TMEM178A. Interacts with CASQ1 (via C-terminal end and preferentially with the monomeric form); this interaction increases in response to a depletion of intracellular calcium, decreases both STIM1 aggregation and clustering, interaction of STIM1 with ORAI1 and store-operated Ca(2+) entry (SOCE) activity. In terms of processing, glycosylation is required for cell surface expression. Post-translationally, phosphorylated predominantly on Ser residues.

The protein localises to the cell membrane. Its subcellular location is the endoplasmic reticulum membrane. It localises to the sarcoplasmic reticulum. The protein resides in the cytoplasm. It is found in the cytoskeleton. Functionally, acts as a Ca(2+) sensor that gates two major inward rectifying Ca(2+) channels at the plasma membrane: Ca(2+) release-activated Ca(2+) (CRAC) channels and arachidonate-regulated Ca(2+)-selective (ARC) channels. Plays a role in mediating store-operated Ca(2+) entry (SOCE), a Ca(2+) influx following depletion of intracellular Ca(2+) stores. Upon Ca(2+) depletion, translocates from the endoplasmic reticulum to the plasma membrane where it activates CRAC channel pore-forming subunits ORA1, ORA2 and ORAI3 to generate sustained and oscillatory Ca(2+) entry. Involved in enamel formation. This chain is Stromal interaction molecule 1 (STIM1), found in Bos taurus (Bovine).